The sequence spans 295 residues: F-box only protein 6 (295 aa).

Residues 1 to 48 (MVHINELPENILLELFIHIPAPQLLRNCRLVCRLWRDLIDVVSLWKRK) form the F-box domain. Positions 69–250 (FYILCSLQRN…VTNSSIIISH (182 aa)) constitute an FBA domain. A phosphoserine mark is found at S249 and S276. At T280 the chain carries Phosphothreonine.

In terms of assembly, interacts with CHEK1 and CUL1. Part of a SCF (SKP1-cullin-F-box) protein ligase complex. Interacts with VCP. In terms of tissue distribution, present in liver and kidney (at protein level). Widely expressed.

The protein resides in the cytoplasm. It participates in protein modification; protein ubiquitination. Its function is as follows. Substrate-recognition component of some SCF (SKP1-CUL1-F-box protein)-type E3 ubiquitin ligase complexes. Involved in DNA damage response by specifically recognizing activated CHEK1 (phosphorylated on 'Ser-345'), promoting its ubiquitination and degradation. Ubiquitination of CHEK1 is required to ensure that activated CHEK1 does not accumulate as cells progress through S phase, or when replication forks encounter transient impediments during normal DNA replication. Involved in endoplasmic reticulum-associated degradation pathway (ERAD) for misfolded lumenal proteins by recognizing and binding sugar chains on unfolded glycoproteins that are retrotranslocated into the cytosol and promoting their ubiquitination and subsequent degradation. Able to recognize and bind denatured glycoproteins, which are modified with not only high-mannose but also complex-type oligosaccharides. Also recognizes sulfated glycans. The sequence is that of F-box only protein 6 (Fbxo6) from Mus musculus (Mouse).